We begin with the raw amino-acid sequence, 393 residues long: Staphopain B (393 aa).

A signal peptide spans 1-36 (MNSSCKSRVFNIISIIMVSMLILSLGAFANNNKAKA). The propeptide occupies 37–219 (DSHSKQLEIN…KVEENEAIQE (183 aa)). Residues C243, H340, and N360 contribute to the active site.

The protein belongs to the peptidase C47 family. In the cytoplasm, prematurely activated/folded SspB forms a stable non-covalent complex with SspC. Post-translationally, proteolytically cleaved by staphylococcal serine protease (SspA).

The protein localises to the secreted. Its activity is regulated as follows. Prematurely activated/folded staphopain B is inhibited by staphostatin B (SspC), which is probably required to protect staphylococcal cytoplasmic proteins from degradation by SspB. Also inactivated by E-64 and stimulated by EDTA. In terms of biological role, cysteine protease that plays an important role in the inhibition of host innate immune response. Degrades host elastin, fibrogen, fibronectin and kininogen. Blocks phagocytosis of opsonised S.aureus by neutrophils and monocytes by inducing their death in a proteolytic activity-dependent manner. Decreases surface expression of the 'don't eat me' signal CD31 on neutrophils. Cleaves host galectin-3/LGALS3, thereby inhibiting the neutrophil-activating ability of the lectin. The sequence is that of Staphopain B (sspB) from Staphylococcus aureus (strain NCTC 8325 / PS 47).